We begin with the raw amino-acid sequence, 556 residues long: Arginine--tRNA ligase (556 aa).

Positions alanine 130–glycine 140 match the 'HIGH' region motif.

This sequence belongs to the class-I aminoacyl-tRNA synthetase family. In terms of assembly, monomer.

It is found in the cytoplasm. The enzyme catalyses tRNA(Arg) + L-arginine + ATP = L-arginyl-tRNA(Arg) + AMP + diphosphate. This chain is Arginine--tRNA ligase, found in Corynebacterium jeikeium (strain K411).